Here is a 310-residue protein sequence, read N- to C-terminus: Methionyl-tRNA formyltransferase (310 aa).

Residue 111–114 (SILP) coordinates (6S)-5,6,7,8-tetrahydrofolate.

The protein belongs to the Fmt family.

It catalyses the reaction L-methionyl-tRNA(fMet) + (6R)-10-formyltetrahydrofolate = N-formyl-L-methionyl-tRNA(fMet) + (6S)-5,6,7,8-tetrahydrofolate + H(+). Its function is as follows. Attaches a formyl group to the free amino group of methionyl-tRNA(fMet). The formyl group appears to play a dual role in the initiator identity of N-formylmethionyl-tRNA by promoting its recognition by IF2 and preventing the misappropriation of this tRNA by the elongation apparatus. This chain is Methionyl-tRNA formyltransferase, found in Finegoldia magna (strain ATCC 29328 / DSM 20472 / WAL 2508) (Peptostreptococcus magnus).